A 343-amino-acid polypeptide reads, in one-letter code: L-threonine 3-dehydrogenase (343 aa).

C40 provides a ligand contact to Zn(2+). Active-site charge relay system residues include T42 and H45. Residues H65, E66, C95, C98, C101, and C109 each coordinate Zn(2+). NAD(+) contacts are provided by residues I177, D197, R202, L264 to I266, and I288 to Y289.

It belongs to the zinc-containing alcohol dehydrogenase family. Homotetramer. Zn(2+) serves as cofactor.

It localises to the cytoplasm. The catalysed reaction is L-threonine + NAD(+) = (2S)-2-amino-3-oxobutanoate + NADH + H(+). The protein operates within amino-acid degradation; L-threonine degradation via oxydo-reductase pathway; glycine from L-threonine: step 1/2. Functionally, catalyzes the NAD(+)-dependent oxidation of L-threonine to 2-amino-3-ketobutyrate. The protein is L-threonine 3-dehydrogenase of Vibrio vulnificus (strain YJ016).